A 173-amino-acid polypeptide reads, in one-letter code: Large ribosomal subunit protein uL16 (173 aa).

This sequence belongs to the universal ribosomal protein uL16 family.

The chain is Large ribosomal subunit protein uL16 from Methanococcus maripaludis (strain C6 / ATCC BAA-1332).